The primary structure comprises 335 residues: UPF0353 protein MAV335 (335 aa).

2 consecutive transmembrane segments (helical) span residues 18-38 and 67-87; these read WFFLFLLVVAGLAALYILMQL and LPAILLVASLVLFTIAMAGPT. Residues 98-295 form the VWFA domain; it reads VVMLVIDVSQ…QELKSVYATL (198 aa). A helical transmembrane segment spans residues 309–329; it reads SVGWVRLGALVLRLAADALLI.

This sequence belongs to the UPF0353 family.

Its subcellular location is the cell membrane. In Mycobacterium avium, this protein is UPF0353 protein MAV335.